A 430-amino-acid chain; its full sequence is Lipoyl synthase, mitochondrial (430 aa).

A mitochondrion-targeting transit peptide spans 1–37 (MAASTGKLRTLFSAHSSLSARPSSALPALRLTILRSY). Residues 40-56 (TTPPDSSISNPSNPSTT) are compositionally biased toward low complexity. Residues 40–64 (TTPPDSSISNPSNPSTTVKRPPTAF) form a disordered region. C141, C146, C152, C172, C176, C179, and S387 together coordinate [4Fe-4S] cluster. A Radical SAM core domain is found at 155 to 376 (GSSKSAATAT…KERALEMGFL (222 aa)).

It belongs to the radical SAM superfamily. Lipoyl synthase family. [4Fe-4S] cluster is required as a cofactor.

The protein localises to the mitochondrion. The catalysed reaction is [[Fe-S] cluster scaffold protein carrying a second [4Fe-4S](2+) cluster] + N(6)-octanoyl-L-lysyl-[protein] + 2 oxidized [2Fe-2S]-[ferredoxin] + 2 S-adenosyl-L-methionine + 4 H(+) = [[Fe-S] cluster scaffold protein] + N(6)-[(R)-dihydrolipoyl]-L-lysyl-[protein] + 4 Fe(3+) + 2 hydrogen sulfide + 2 5'-deoxyadenosine + 2 L-methionine + 2 reduced [2Fe-2S]-[ferredoxin]. It participates in protein modification; protein lipoylation via endogenous pathway; protein N(6)-(lipoyl)lysine from octanoyl-[acyl-carrier-protein]: step 2/2. Functionally, catalyzes the radical-mediated insertion of two sulfur atoms into the C-6 and C-8 positions of the octanoyl moiety bound to the lipoyl domains of lipoate-dependent enzymes, thereby converting the octanoylated domains into lipoylated derivatives. The polypeptide is Lipoyl synthase, mitochondrial (Blastomyces gilchristii (strain SLH14081) (Blastomyces dermatitidis)).